A 107-amino-acid chain; its full sequence is Anti-adapter protein IraM (107 aa).

Belongs to the IraM/RssC family.

Its subcellular location is the cytoplasm. Inhibits RpoS proteolysis by regulating RssB activity, thereby increasing the stability of the sigma stress factor RpoS during magnesium starvation. The protein is Anti-adapter protein IraM of Escherichia coli (strain 55989 / EAEC).